A 392-amino-acid polypeptide reads, in one-letter code: Immunoglobulin-binding protein EibA (392 aa).

The signal sequence occupies residues 1–27 (MSKKFTKAVLSAAMAGVLFGVSFDIMA). Residues 28–301 (AEQSYSALNA…IAANTRTLQQ (274 aa)) form a surface exposed passenger domain region. Residues 28–341 (AEQSYSALNA…GLFQPYSVGK (314 aa)) are Extracellular-facing. Residues 174 to 215 (ESANSTIVANELEAQKGKLDAQKGELEAQKKNLGELTTRTDK) are a coiled coil. A right-handed coiled-coil (RHcc) region spans residues 187–230 (AQKGKLDAQKGELEAQKKNLGELTTRTDKIDAAAAATAAKVESR). Residues 231-256 (TLVGVSSDGTLTRAEGAKNTISVNDG) are saddle domain. The interval 257 to 322 (LVALSGRTDR…INENHKEMKR (66 aa)) is left-handed coiled-coil (LHcc). The interval 299–341 (LQQHSARLDSQQRQINENHKEMKRAAAQSAALTGLFQPYSVGK) is outer membrane translocation of the passenger domain. 4 beta stranded membrane passes run 342 to 352 (FNASAAVGGYS), 355 to 366 (QALAVGVGYRFN), 369 to 378 (TAAKAGVAFS), and 382 to 392 (ASWNVGVNFEF). The translocator domain stretch occupies residues 342–392 (FNASAAVGGYSDEQALAVGVGYRFNEQTAAKAGVAFSDGDASWNVGVNFEF).

Belongs to the autotransporter-2 (AT-2) (TC 1.B.40) family. Eib subfamily. In terms of assembly, homotrimer; can probably form mixed heterotrimers in vivo. Will form mixed heterotrimers with EibD; these are correctly located in the outer membrane and bind IgG Fc, although less well than homotrimers. Does not form trimers with distantly related YadA from Y.enterocolitica; coexpression was lethal and one of the genes is eliminated in vivo. If the full translocator domain (299-392) is exchanged with that of YadA ('368-455'), will form heterotrimers with YadA and vice-versa. In denaturing gels runs as 2 bands of about 121 and 131 kDa; extracting the sample with 88% phenol at 70 degrees Celsius reduces part of the signal to about 45 kDa. Binds the Fc portion of IgG; binds more than 1 Fc per subunit.

The protein localises to the cell surface. It localises to the cell outer membrane. Its function is as follows. Binds (in a non-immune fashion) to the Fc portion of human IgG but not IgA; binding occurs on the cell surface. Confers the ability to survive exposure to human serum exposure. Binds to the Fc portion of human IgG and to whole mouse antibodies also via Fc, binds more than 1 Fc or IgG. This chain is Immunoglobulin-binding protein EibA, found in Escherichia coli.